Consider the following 120-residue polypeptide: uncharacterized protein (120 aa).

It is found in the cytoplasm. The protein resides in the nucleus. This is an uncharacterized protein from Schizosaccharomyces pombe (strain 972 / ATCC 24843) (Fission yeast).